A 256-amino-acid chain; its full sequence is NH(3)-dependent NAD(+) synthetase (256 aa).

29 to 36 (GISGGIDS) lines the ATP pocket. Asp35 is a binding site for Mg(2+). Arg115 serves as a coordination point for deamido-NAD(+). Thr135 contacts ATP. Glu140 contributes to the Mg(2+) binding site. Deamido-NAD(+) is bound by residues Lys148 and Asp155. ATP contacts are provided by Lys164 and Ser186. Residue 245 to 246 (HK) coordinates deamido-NAD(+).

It belongs to the NAD synthetase family. In terms of assembly, homodimer.

The enzyme catalyses deamido-NAD(+) + NH4(+) + ATP = AMP + diphosphate + NAD(+) + H(+). The protein operates within cofactor biosynthesis; NAD(+) biosynthesis; NAD(+) from deamido-NAD(+) (ammonia route): step 1/1. Functionally, catalyzes the ATP-dependent amidation of deamido-NAD to form NAD. Uses ammonia as a nitrogen source. The sequence is that of NH(3)-dependent NAD(+) synthetase from Methanosarcina mazei (strain ATCC BAA-159 / DSM 3647 / Goe1 / Go1 / JCM 11833 / OCM 88) (Methanosarcina frisia).